Here is a 306-residue protein sequence, read N- to C-terminus: MPNPLYRQHIISISDLSREQLEYLLQTALKLKAHPRGDLLEGKLIGSCFFEPSTRTRLSFETAVQRLGGKVIGFSDGANTSAKKGETLADTARIISGYTDAIVQRHPKDGAARVAAEFSRVPVINAGDGTNQHPSQTLLDLVTIYETQGRLDKLKIAMAGDLKYGRTVHSLCQALKRWGCEFAFVSPPSLAMPDYITEELEEADCRYRALGSLEEAAEWADILYMTRVQRERFDEQEFAKIQGKFNLEASMLARAKPNLRVLHPLPRTDEIHPDVDAAPHAYYFEQATNGVYARMAILSLVLNEEV.

Carbamoyl phosphate is bound by residues Arg55 and Thr56. An L-aspartate-binding site is contributed by Lys84. The carbamoyl phosphate site is built by Arg105, His133, and Gln136. L-aspartate is bound by residues Arg166 and Arg227. 2 residues coordinate carbamoyl phosphate: Leu265 and Pro266.

This sequence belongs to the aspartate/ornithine carbamoyltransferase superfamily. ATCase family. In terms of assembly, heterododecamer (2C3:3R2) of six catalytic PyrB chains organized as two trimers (C3), and six regulatory PyrI chains organized as three dimers (R2).

The enzyme catalyses carbamoyl phosphate + L-aspartate = N-carbamoyl-L-aspartate + phosphate + H(+). It functions in the pathway pyrimidine metabolism; UMP biosynthesis via de novo pathway; (S)-dihydroorotate from bicarbonate: step 2/3. In terms of biological role, catalyzes the condensation of carbamoyl phosphate and aspartate to form carbamoyl aspartate and inorganic phosphate, the committed step in the de novo pyrimidine nucleotide biosynthesis pathway. This chain is Aspartate carbamoyltransferase catalytic subunit, found in Neisseria gonorrhoeae (strain ATCC 700825 / FA 1090).